Reading from the N-terminus, the 117-residue chain is Large ribosomal subunit protein uL18 (117 aa).

The protein belongs to the universal ribosomal protein uL18 family. As to quaternary structure, part of the 50S ribosomal subunit; part of the 5S rRNA/L5/L18/L25 subcomplex. Contacts the 5S and 23S rRNAs.

In terms of biological role, this is one of the proteins that bind and probably mediate the attachment of the 5S RNA into the large ribosomal subunit, where it forms part of the central protuberance. The protein is Large ribosomal subunit protein uL18 of Klebsiella pneumoniae (strain 342).